The sequence spans 516 residues: L-amino acid oxidase Lm29 (516 aa).

The signal sequence occupies residues 1–18; the sequence is MNVFFMFSLLFLAALGSC. A disulfide bridge links Cys-28 with Cys-191. Residues 61–62, 81–82, Arg-89, and 105–108 each bind FAD; these read MS, EA, and GPMR. A substrate-binding site is contributed by Arg-108. Asn-190 carries N-linked (GlcNAc...) asparagine glycosylation. His-241 is a substrate binding site. Val-279 is an FAD binding site. A disulfide bridge links Cys-349 with Cys-430. An N-linked (GlcNAc...) asparagine glycan is attached at Asn-379. Tyr-390 is a binding site for substrate. FAD-binding positions include Glu-475 and 482–487; that span reads GWIDST. 482–483 provides a ligand contact to substrate; that stretch reads GW.

Belongs to the flavin monoamine oxidase family. FIG1 subfamily. Homodimer; non-covalently linked. FAD is required as a cofactor. As to expression, expressed by the venom gland.

Its subcellular location is the secreted. It carries out the reaction an L-alpha-amino acid + O2 + H2O = a 2-oxocarboxylate + H2O2 + NH4(+). The catalysed reaction is L-leucine + O2 + H2O = 4-methyl-2-oxopentanoate + H2O2 + NH4(+). It catalyses the reaction L-phenylalanine + O2 + H2O = 3-phenylpyruvate + H2O2 + NH4(+). The enzyme catalyses L-tryptophan + O2 + H2O = indole-3-pyruvate + H2O2 + NH4(+). It carries out the reaction L-methionine + O2 + H2O = 4-methylsulfanyl-2-oxobutanoate + H2O2 + NH4(+). The catalysed reaction is L-isoleucine + O2 + H2O = (S)-3-methyl-2-oxopentanoate + H2O2 + NH4(+). It catalyses the reaction L-tyrosine + O2 + H2O = 3-(4-hydroxyphenyl)pyruvate + H2O2 + NH4(+). Catalyzes an oxidative deamination of predominantly hydrophobic and aromatic L-amino acids, thus producing hydrogen peroxide that may contribute to the diverse toxic effects of this enzyme. Is highly active on L-Met=L-Leu&gt;&gt;L-Phe&gt;L-Trp&gt;L-Tyr&gt;L-Ile, and weakly or not active on L-His, L-Arg, L-Val, L-Gln, L-Thr, L-Lys, and L-Ser. Exhibits a low myotoxicity (a mild myonecrosis is observed after injection in mice quadriceps muscle). In vitro, is cytotoxic to a lot of human cell lines, including AGS (IC(50)=22.7 ug/ml), MCF-7 (IC(50)=1.4 ug/ml), HL-60, HeLa and Jurkat cells, as well as to the parasite Leishmania brasiliensis (IC(50)=2.22 ug/ml). This cytotoxicity is dependent on the production of hydrogen peroxyde, since it is inhibited by catalase, a hydrogen peroxyde scavenger. This chain is L-amino acid oxidase Lm29, found in Lachesis muta (South American bushmaster).